Reading from the N-terminus, the 509-residue chain is Probable glycine dehydrogenase (decarboxylating) subunit 2 (509 aa).

Lys-278 carries the N6-(pyridoxal phosphate)lysine modification.

This sequence belongs to the GcvP family. C-terminal subunit subfamily. The glycine cleavage system is composed of four proteins: P, T, L and H. In this organism, the P 'protein' is a heterodimer of two subunits. It depends on pyridoxal 5'-phosphate as a cofactor.

It carries out the reaction N(6)-[(R)-lipoyl]-L-lysyl-[glycine-cleavage complex H protein] + glycine + H(+) = N(6)-[(R)-S(8)-aminomethyldihydrolipoyl]-L-lysyl-[glycine-cleavage complex H protein] + CO2. Functionally, the glycine cleavage system catalyzes the degradation of glycine. The P protein binds the alpha-amino group of glycine through its pyridoxal phosphate cofactor; CO(2) is released and the remaining methylamine moiety is then transferred to the lipoamide cofactor of the H protein. This Saccharolobus islandicus (strain Y.N.15.51 / Yellowstone #2) (Sulfolobus islandicus) protein is Probable glycine dehydrogenase (decarboxylating) subunit 2.